The sequence spans 228 residues: UPF0758 protein Reut_A2732 (228 aa).

The region spanning 102 to 224 is the MPN domain; that stretch reads GLDSPAAVRS…VHSFAEHGEL (123 aa). 3 residues coordinate Zn(2+): His-173, His-175, and Asp-186. The JAMM motif motif lies at 173–186; that stretch reads HNHPSGCCTPSQSD.

Belongs to the UPF0758 family.

This Cupriavidus pinatubonensis (strain JMP 134 / LMG 1197) (Cupriavidus necator (strain JMP 134)) protein is UPF0758 protein Reut_A2732.